The following is a 669-amino-acid chain: UvrABC system protein C (669 aa).

The 78-residue stretch at Asp14 to Ile91 folds into the GIY-YIG domain. The 36-residue stretch at Lys196–Leu231 folds into the UVR domain. The interval Pro647–Ser669 is disordered. Over residues His648–Lys658 the composition is skewed to basic and acidic residues.

The protein belongs to the UvrC family. In terms of assembly, interacts with UvrB in an incision complex.

It is found in the cytoplasm. The UvrABC repair system catalyzes the recognition and processing of DNA lesions. UvrC both incises the 5' and 3' sides of the lesion. The N-terminal half is responsible for the 3' incision and the C-terminal half is responsible for the 5' incision. This chain is UvrABC system protein C, found in Lactococcus lactis subsp. cremoris (strain MG1363).